We begin with the raw amino-acid sequence, 702 residues long: Translation factor GUF1 homolog, chloroplastic (702 aa).

Low complexity predominate over residues 1-30 (MASAAPASRGAARASTAARDAPFAAAARGP). The segment at 1–41 (MASAAPASRGAARASTAARDAPFAAAARGPGRFRRDGNGRN) is disordered. One can recognise a tr-type G domain in the interval 87–283 (SQIRNFSIIA…NIVKMIPPPP (197 aa)). Residues 96-103 (AHIDHGKS), 162-166 (DTPGH), and 216-219 (NKID) each bind GTP.

This sequence belongs to the TRAFAC class translation factor GTPase superfamily. Classic translation factor GTPase family. LepA subfamily.

It localises to the plastid. The protein localises to the chloroplast. The enzyme catalyses GTP + H2O = GDP + phosphate + H(+). In terms of biological role, promotes chloroplast protein synthesis. May act as a fidelity factor of the translation reaction, by catalyzing a one-codon backward translocation of tRNAs on improperly translocated ribosomes. This is Translation factor GUF1 homolog, chloroplastic from Micromonas pusilla (strain CCMP1545) (Picoplanktonic green alga).